Reading from the N-terminus, the 238-residue chain is DNA damage-regulated autophagy modulator protein 1 (238 aa).

6 helical membrane-spanning segments follow: residues 9 to 29, 53 to 73, 91 to 111, 116 to 136, 161 to 181, and 200 to 220; these read AFVP…SYVV, SGIF…TMYT, VFNL…GIVA, LAVP…GVVY, MAIS…ASLI, and VSAI…LTFI.

This sequence belongs to the DRAM/TMEM150 family.

It is found in the lysosome membrane. Its function is as follows. Lysosomal modulator of autophagy that plays a central role in p53/TP53-mediated apoptosis. Not involved in p73/TP73-mediated autophagy. The sequence is that of DNA damage-regulated autophagy modulator protein 1 (Dram1) from Mus musculus (Mouse).